The sequence spans 502 residues: N-fatty-acyl-amino acid synthase/hydrolase PM20D1 (502 aa).

Residues 1 to 25 form the signal peptide; the sequence is MAQRCVCVLALVAMLLLVFPTVSRS. His125 provides a ligand contact to Zn(2+). The active site involves Asp127. Zn(2+) is bound at residue Asp157. Residue Glu191 is the Proton acceptor of the active site. The Zn(2+) site is built by Glu192 and Asp217. Asn252 is a glycosylation site (N-linked (GlcNAc...) asparagine). His464 contacts Zn(2+).

Belongs to the peptidase M20A family. Zn(2+) serves as cofactor.

Its subcellular location is the secreted. The catalysed reaction is an N-acyl-L-amino acid + H2O = an L-alpha-amino acid + a carboxylate. It catalyses the reaction an N-acyl-aromatic L-alpha-amino acid + H2O = an aromatic L-alpha-amino acid + a carboxylate. The enzyme catalyses L-phenylalanine + (9Z)-octadecenoate = N-(9Z-octadecenoyl)-L-phenylalanine + H2O. It carries out the reaction N-(9Z-octadecenoyl)-L-leucine + H2O = L-leucine + (9Z)-octadecenoate. The catalysed reaction is N-(5Z,8Z,11Z,14Z)-eicosatetraenoyl-glycine + H2O = (5Z,8Z,11Z,14Z)-eicosatetraenoate + glycine. It catalyses the reaction N-hexadecanoyl-L-phenylalanine + H2O = hexadecanoate + L-phenylalanine. The enzyme catalyses N-octadecanoyl-L-phenylalanine + H2O = octadecanoate + L-phenylalanine. It carries out the reaction N-(4Z,7Z,10Z,13Z,16Z,19Z-docosahexaenoyl)-L-phenylalanine + H2O = (4Z,7Z,10Z,13Z,16Z,19Z)-docosahexaenoate + L-phenylalanine. The catalysed reaction is N-(9Z-octadecenoyl)-L-asparagine + H2O = L-asparagine + (9Z)-octadecenoate. It catalyses the reaction (9Z)-octadecenoate + glycine = N-(9Z-octadecenoyl)glycine + H2O. The enzyme catalyses N-(9Z-octadecenoyl)-L-lysine + H2O = L-lysine + (9Z)-octadecenoate. It carries out the reaction N-(9Z-octadecenoyl)-L-methionine + H2O = (9Z)-octadecenoate + L-methionine. The catalysed reaction is N-(9Z-octadecenoyl)-L-serine + H2O = L-serine + (9Z)-octadecenoate. It catalyses the reaction N-(9Z-octadecenoyl)-L-tryptophan + H2O = L-tryptophan + (9Z)-octadecenoate. The enzyme catalyses N-(9Z-octadecenoyl)-L-tyrosine + H2O = L-tyrosine + (9Z)-octadecenoate. It carries out the reaction N-(9Z-octadecenoyl)-L-glutamine + H2O = L-glutamine + (9Z)-octadecenoate. The catalysed reaction is N-(5Z,8Z,11Z,14Z-eicosatetraenoyl)-L-serine + H2O = (5Z,8Z,11Z,14Z)-eicosatetraenoate + L-serine. It catalyses the reaction (5Z,8Z,11Z,14Z)-eicosatetraenoate + L-phenylalanine = N-(5Z,8Z,11Z,14Z-eicosatetraenoyl)-L-phenylalanine + H2O. It participates in amino-acid metabolism. The protein operates within energy metabolism. Its pathway is lipid metabolism; fatty acid metabolism. Its activity is regulated as follows. Lipoproteins are powerful coactivators of PM20D1 activity in vitro and NAA biosynthesis in vivo. Its function is as follows. Secreted enzyme that regulates the endogenous N-fatty acyl amino acid (NAAs) tissue and circulating levels by functioning as a bidirectional NAA synthase/hydrolase. It condenses free fatty acids and free amino acids to generate NAAs and bidirectionally catalyzes the reverse hydrolysis reaction. Some of these NAAs stimulate oxidative metabolism via mitochondrial uncoupling, increasing energy expenditure in a UPC1-independent manner. Thereby, this secreted protein may indirectly regulate whole body energy expenditure. PM20D1 circulates in tight association with both low- and high-density (LDL and HDL,respectively) lipoprotein particles. The sequence is that of N-fatty-acyl-amino acid synthase/hydrolase PM20D1 from Homo sapiens (Human).